An 824-amino-acid polypeptide reads, in one-letter code: Putative beta-glucuronidase (824 aa).

A helical transmembrane segment spans residues 26–43 (YLKLVLVLYLIMVSWSGY). Glu430 functions as the Proton donor in the catalytic mechanism.

Belongs to the glycosyl hydrolase 2 family.

The protein localises to the membrane. It catalyses the reaction a beta-D-glucuronoside + H2O = D-glucuronate + an alcohol. Its function is as follows. Glycoside hydrolase that may be involved in ulvan degradation. Ulvan is the main polysaccharide component of the Ulvales (green seaweed) cell wall. It is composed of disaccharide building blocks comprising 3-sulfated rhamnose (Rha3S) linked to D-glucuronic acid (GlcA), L-iduronic acid (IduA), or D-xylose (Xyl). This Formosa agariphila (strain DSM 15362 / KCTC 12365 / LMG 23005 / KMM 3901 / M-2Alg 35-1) protein is Putative beta-glucuronidase.